Here is a 120-residue protein sequence, read N- to C-terminus: NAD(P)H-quinone oxidoreductase subunit 3, chloroplastic (120 aa).

3 consecutive transmembrane segments (helical) span residues 9–29, 64–84, and 88–108; these read IFWA…LISG, MFAL…PWAM, and VLGV…IVGS.

The protein belongs to the complex I subunit 3 family. NDH is composed of at least 16 different subunits, 5 of which are encoded in the nucleus.

The protein localises to the plastid. Its subcellular location is the chloroplast thylakoid membrane. It catalyses the reaction a plastoquinone + NADH + (n+1) H(+)(in) = a plastoquinol + NAD(+) + n H(+)(out). The enzyme catalyses a plastoquinone + NADPH + (n+1) H(+)(in) = a plastoquinol + NADP(+) + n H(+)(out). Its function is as follows. NDH shuttles electrons from NAD(P)H:plastoquinone, via FMN and iron-sulfur (Fe-S) centers, to quinones in the photosynthetic chain and possibly in a chloroplast respiratory chain. The immediate electron acceptor for the enzyme in this species is believed to be plastoquinone. Couples the redox reaction to proton translocation, and thus conserves the redox energy in a proton gradient. The protein is NAD(P)H-quinone oxidoreductase subunit 3, chloroplastic of Carica papaya (Papaya).